A 513-amino-acid polypeptide reads, in one-letter code: Xylose import ATP-binding protein XylG (513 aa).

2 ABC transporter domains span residues 5–242 and 259–505; these read LEMK…VGRE and LRIE…LRSE. 37–44 contacts ATP; the sequence is GENGSGKS.

It belongs to the ABC transporter superfamily. Xylose importer (TC 3.A.1.2.4) family. As to quaternary structure, the complex is composed of two ATP-binding proteins (XylG), two transmembrane proteins (XylH) and a solute-binding protein (XylF).

It is found in the cell inner membrane. It carries out the reaction D-xylose(out) + ATP + H2O = D-xylose(in) + ADP + phosphate + H(+). Part of the ABC transporter complex XylFGH involved in xylose import. Responsible for energy coupling to the transport system. The polypeptide is Xylose import ATP-binding protein XylG (Escherichia coli (strain UTI89 / UPEC)).